Consider the following 430-residue polypeptide: Tol-Pal system protein TolB (430 aa).

A signal peptide spans 1–21 (MKQALRVAFGFLMLWAAVLHA).

The protein belongs to the TolB family. As to quaternary structure, the Tol-Pal system is composed of five core proteins: the inner membrane proteins TolA, TolQ and TolR, the periplasmic protein TolB and the outer membrane protein Pal. They form a network linking the inner and outer membranes and the peptidoglycan layer.

It is found in the periplasm. Functionally, part of the Tol-Pal system, which plays a role in outer membrane invagination during cell division and is important for maintaining outer membrane integrity. TolB occupies a key intermediary position in the Tol-Pal system because it communicates directly with both membrane-embedded components, Pal in the outer membrane and TolA in the inner membrane. This Klebsiella pneumoniae (strain 342) protein is Tol-Pal system protein TolB.